We begin with the raw amino-acid sequence, 804 residues long: ATP-dependent RNA helicase dbp4 (804 aa).

The disordered stretch occupies residues 1–24 (MAPANAPRNGKYAKSSQRTLKRKR). The Q motif motif lies at 46–74 (KAFTDLPLSEPTLSGLSASHYKTLTDIQS). Positions 77 to 251 (VSHALKGRDI…RLSLQDPEYV (175 aa)) constitute a Helicase ATP-binding domain. 90–97 (AKTGSGKT) is an ATP binding site. The DEAD box signature appears at 199–202 (DEAD). The Helicase C-terminal domain occupies 277 to 436 (KLDILWSFIR…SIKNQLQNMC (160 aa)). Disordered stretches follow at residues 493–541 (GDDT…DRMF), 589–615 (DKQLEVGGSSDESGSDSEAETGKKDVK), and 695–804 (LADV…GLLG). Basic and acidic residues predominate over residues 521 to 541 (DEKKSKKKDAPQVRTKYDRMF). The segment covering 695 to 705 (LADVEDKELVK) has biased composition (basic and acidic residues). Residues 706-715 (QKRREKKEKR) show a composition bias toward basic residues.

Belongs to the DEAD box helicase family. DDX10/DBP4 subfamily. As to quaternary structure, interacts with the U3 and U14 snoRNAs. Associates with pre-ribosomal complexes.

It is found in the nucleus. The protein resides in the nucleolus. The enzyme catalyses ATP + H2O = ADP + phosphate + H(+). In terms of biological role, ATP-dependent RNA helicase required for ribosome biogenesis. Involved in the release of U14 snoRNA in pre-ribosomal complexes. Required for pre-rRNA cleavage at site A2. This Aspergillus terreus (strain NIH 2624 / FGSC A1156) protein is ATP-dependent RNA helicase dbp4 (dbp4).